The following is a 375-amino-acid chain: Glutamate 5-kinase (375 aa).

Lys13 lines the ATP pocket. Residues Ser54, Asp141, and Asn153 each coordinate substrate. ATP is bound by residues 173–174 (TD) and 216–222 (TGGMATK). In terms of domain architecture, PUA spans 281–359 (TGKIFIDAGA…EAIAAVLGYV (79 aa)).

The protein belongs to the glutamate 5-kinase family.

The protein resides in the cytoplasm. The catalysed reaction is L-glutamate + ATP = L-glutamyl 5-phosphate + ADP. The protein operates within amino-acid biosynthesis; L-proline biosynthesis; L-glutamate 5-semialdehyde from L-glutamate: step 1/2. Catalyzes the transfer of a phosphate group to glutamate to form L-glutamate 5-phosphate. The chain is Glutamate 5-kinase from Synechocystis sp. (strain ATCC 27184 / PCC 6803 / Kazusa).